The primary structure comprises 280 residues: Beta carbonic anhydrase 4 (280 aa).

Ala-2 carries the post-translational modification N-acetylalanine. Positions 47–76 (NVAAAKIKALTAELKELDSSNSDAIERIKT) form a coiled coil. Thr-57 bears the Phosphothreonine mark. Residue Ser-117 is modified to Phosphoserine. An S-nitrosocysteine modification is found at Cys-223.

Belongs to the beta-class carbonic anhydrase family. In terms of assembly, interacts with DTX56. Strongly expressed in aerial tissues including leaves, stems, flowers and siliques. Accumulates in both guard cells and mesophyll cells.

Its subcellular location is the cell membrane. The catalysed reaction is hydrogencarbonate + H(+) = CO2 + H2O. In terms of biological role, reversible hydration of carbon dioxide. Together with BCA1, involved in the CO(2) signaling pathway which controls gas-exchange between plants and the atmosphere by modulating stomatal development and movements. Promotes water use efficiency. The polypeptide is Beta carbonic anhydrase 4 (Arabidopsis thaliana (Mouse-ear cress)).